Consider the following 211-residue polypeptide: Large ribosomal subunit protein bL25 (211 aa).

A disordered region spans residues 175-211 (VSEPVEQDLGEESETEEEGAEGEKPAESTGEEPGDDE). The segment covering 179–194 (VEQDLGEESETEEEGA) has biased composition (acidic residues).

It belongs to the bacterial ribosomal protein bL25 family. CTC subfamily. In terms of assembly, part of the 50S ribosomal subunit; part of the 5S rRNA/L5/L18/L25 subcomplex. Contacts the 5S rRNA. Binds to the 5S rRNA independently of L5 and L18.

Functionally, this is one of the proteins that binds to the 5S RNA in the ribosome where it forms part of the central protuberance. The polypeptide is Large ribosomal subunit protein bL25 (Kocuria rhizophila (strain ATCC 9341 / DSM 348 / NBRC 103217 / DC2201)).